A 152-amino-acid polypeptide reads, in one-letter code: UPF0719 transmembrane protein MT2674.1 (152 aa).

The next 4 membrane-spanning stretches (helical) occupy residues 21–41 (VATVLYFLVGAAVLVAGFLMV), 62–82 (VVLAATMYVALAIVTIAAIYA), 92–112 (IGVAVYGIVGVALQGVALVIL), and 131–151 (PAVFATAVMLLAVAGVIAAAL).

Belongs to the UPF0719 family.

It is found in the cell membrane. In Mycobacterium tuberculosis (strain CDC 1551 / Oshkosh), this protein is UPF0719 transmembrane protein MT2674.1.